The sequence spans 80 residues: Nuclear protein 1 (80 aa).

Disordered stretches follow at residues 1–21 (MATL…EDED) and 38–80 (VGGG…KAWR). Residues 61-80 (GHERKLLTKFQNSERKKAWR) are compositionally biased toward basic and acidic residues. The short motif at 64 to 80 (RKLLTKFQNSERKKAWR) is the Nuclear localization signal element.

This sequence belongs to the NUPR family. As to quaternary structure, monomer. Directly interacts with MSL1 and binds MORF4L1, two components of histone acetyltransferase complex; the interaction with MORF4L1 may be mediated by MSL1. Interacts with EP300; this interaction enhances the effect of EP300 on PAX2 transcription factor activity. Interacts with PAXIP1; this interaction prevents PAXIP1 inhibition of PAX2 transcription factor activity. Interacts with COPS5; this interaction allows COPS5-dependent CDKN1B nuclear to cytoplasm translocation. Interacts with RNF2. Interacts with FOXO3; this interaction represses FOXO3 transactivation. Interacts with PTMA; regulates apoptotic process. Interacts with MYOD1, EP300 and DDX5; this interaction coordinates the association of anti-proliferative and pro-myogenic proteins at the myogenin promoter. Interacts with TP53; interaction is stress-dependent. Forms a complex with EP300 and TP53; this complex binds CDKN1A promoter leading to transcriptional induction of CDKN1A. In terms of processing, phosphorylated. Phosphorylation promotes DNA-binding activity. Post-translationally, acetylated. Highly expressed in pancreas and both ovaries and testes.

The protein localises to the nucleus. It is found in the cytoplasm. It localises to the perinuclear region. Transcription regulator that converts stress signals into a program of gene expression that empowers cells with resistance to the stress induced by a change in their microenvironment. Thereby participates in the regulation of many processes namely cell-cycle, apoptosis, autophagy and DNA repair responses. Controls cell cycle progression and protects cells from genotoxic stress induced by doxorubicin through the complex formation with TP53 and EP300 that binds CDKN1A promoter leading to transcriptional induction of CDKN1A. Protects pancreatic cancer cells from stress-induced cell death by binding the RELB promoter and activating its transcription, leading to IER3 transactivation. Negatively regulates apoptosis through interaction with PTMA. Inhibits autophagy-induced apoptosis in cardiac cells through FOXO3 interaction, inducing cytoplasmic translocation of FOXO3 thereby preventing the FOXO3 association with the pro-autophagic BNIP3 promoter. Inhibits cell growth and facilitates programmed cell death by apoptosis after adriamycin-induced DNA damage through transactivation of TP53. Regulates methamphetamine-induced apoptosis and autophagy through DDIT3-mediated endoplasmic reticulum stress pathway. Participates in DNA repair following gamma-irradiation by facilitating DNA access of the transcription machinery through interaction with MSL1 leading to inhibition of histone H4' Lys-16' acetylation (H4K16ac). Coactivator of PAX2 transcription factor activity, both by recruiting the EP300 cofactor to increase PAX2 transcription factor activity and by binding PAXIP1 to suppress PAXIP1-induced inhibition on PAX2. Positively regulates cell cycle progression through interaction with COPS5 inducing cytoplasmic translocation of CDKN1B leading to the CDKN1B degradation. Coordinates, through its interaction with EP300, the assiociation of MYOD1, EP300 and DDX5 to the MYOG promoter, leading to inhibition of cell-cycle progression and myogenic differentiation promotion. Negatively regulates beta cell proliferation via inhibition of cell-cycle regulatory genes expression through the suppression of their promoter activities. Also required for LHB expression and ovarian maturation. Exacerbates CNS inflammation and demyelination upon cuprizone treatment. The sequence is that of Nuclear protein 1 from Mus musculus (Mouse).